The primary structure comprises 39 residues: Phosphate starvation-inducible protein 1 (39 aa).

The protein localises to the cell outer membrane. The sequence is that of Phosphate starvation-inducible protein 1 from Pseudomonas fluorescens.